The following is a 455-amino-acid chain: Ribulose bisphosphate carboxylase large chain (455 aa).

Lys5 bears the N6,N6,N6-trimethyllysine mark. 2 residues coordinate substrate: Asn114 and Thr164. Residue Lys166 is the Proton acceptor of the active site. Lys168 is a binding site for substrate. Lys192, Asp194, and Glu195 together coordinate Mg(2+). Lys192 is subject to N6-carboxylysine. His285 serves as the catalytic Proton acceptor. Substrate is bound by residues Arg286, His318, and Ser370.

It belongs to the RuBisCO large chain family. Type I subfamily. In terms of assembly, heterohexadecamer of 8 large chains and 8 small chains; disulfide-linked. The disulfide link is formed within the large subunit homodimers. Mg(2+) serves as cofactor. The disulfide bond which can form in the large chain dimeric partners within the hexadecamer appears to be associated with oxidative stress and protein turnover.

It is found in the plastid. The protein localises to the chloroplast. It catalyses the reaction 2 (2R)-3-phosphoglycerate + 2 H(+) = D-ribulose 1,5-bisphosphate + CO2 + H2O. The catalysed reaction is D-ribulose 1,5-bisphosphate + O2 = 2-phosphoglycolate + (2R)-3-phosphoglycerate + 2 H(+). Its function is as follows. RuBisCO catalyzes two reactions: the carboxylation of D-ribulose 1,5-bisphosphate, the primary event in carbon dioxide fixation, as well as the oxidative fragmentation of the pentose substrate in the photorespiration process. Both reactions occur simultaneously and in competition at the same active site. This chain is Ribulose bisphosphate carboxylase large chain, found in Lupinus microcarpus (Chick lupine).